We begin with the raw amino-acid sequence, 648 residues long: Centrosomal protein of 63 kDa-B (648 aa).

Coiled coils occupy residues 19–188 and 222–555; these read DSCE…QSHN and EEEL…DAAS. A Phosphoserine; by atm and atr modification is found at Ser-559. Residues 611–644 are a coiled coil; it reads FLQEEEQRSHELLQRLNAHIEELKQESQRTVEHF.

It belongs to the CEP63 family. In terms of processing, phosphorylation at Ser-559 by atm and atr promotes its delocalization from the centrosome and impairs its ability to promote centrosome dependent spindle assembly.

Its subcellular location is the cytoplasm. The protein resides in the cytoskeleton. It localises to the microtubule organizing center. The protein localises to the centrosome. It is found in the centriole. Required for normal spindle assembly. Plays a key role in mother-centriole-dependent centriole duplication. Plays a role in DNA damage response. Following DNA damage, such as double-strand breaks (DSBs), is removed from centrosomes; this leads to the inactivation of spindle assembly and delay in mitotic progression. The protein is Centrosomal protein of 63 kDa-B (cep63-b) of Xenopus laevis (African clawed frog).